The primary structure comprises 98 residues: Small ribosomal subunit protein bS6 (98 aa).

This sequence belongs to the bacterial ribosomal protein bS6 family.

Binds together with bS18 to 16S ribosomal RNA. The protein is Small ribosomal subunit protein bS6 of Moorella thermoacetica (strain ATCC 39073 / JCM 9320).